A 1029-amino-acid polypeptide reads, in one-letter code: Beta-galactosidase 2 (1029 aa).

Residues Asn-104 and Asp-203 each coordinate substrate. Asp-203 provides a ligand contact to Na(+). Mg(2+) contacts are provided by Glu-418, His-420, and Glu-463. Substrate contacts are provided by residues Glu-463 and 539 to 542; that span reads EYAH. Glu-463 functions as the Proton donor in the catalytic mechanism. The Nucleophile role is filled by Glu-539. Asn-599 contacts Mg(2+). The Na(+) site is built by Phe-603 and Asn-606. 2 residues coordinate substrate: Asn-606 and Trp-1004.

This sequence belongs to the glycosyl hydrolase 2 family. As to quaternary structure, homotetramer. It depends on Mg(2+) as a cofactor. The cofactor is Na(+).

It catalyses the reaction Hydrolysis of terminal non-reducing beta-D-galactose residues in beta-D-galactosides.. The sequence is that of Beta-galactosidase 2 from Enterobacter cloacae.